We begin with the raw amino-acid sequence, 426 residues long: Enolase (426 aa).

Glutamine 163 serves as a coordination point for (2R)-2-phosphoglycerate. Catalysis depends on glutamate 205, which acts as the Proton donor. The Mg(2+) site is built by aspartate 242, glutamate 283, and aspartate 310. (2R)-2-phosphoglycerate-binding residues include lysine 335, arginine 364, serine 365, and lysine 386. Residue lysine 335 is the Proton acceptor of the active site.

It belongs to the enolase family. Mg(2+) serves as cofactor.

It localises to the cytoplasm. The protein resides in the secreted. The protein localises to the cell surface. The enzyme catalyses (2R)-2-phosphoglycerate = phosphoenolpyruvate + H2O. The protein operates within carbohydrate degradation; glycolysis; pyruvate from D-glyceraldehyde 3-phosphate: step 4/5. Its function is as follows. Catalyzes the reversible conversion of 2-phosphoglycerate (2-PG) into phosphoenolpyruvate (PEP). It is essential for the degradation of carbohydrates via glycolysis. The chain is Enolase from Cutibacterium acnes (strain DSM 16379 / KPA171202) (Propionibacterium acnes).